The chain runs to 121 residues: Protein yippee-like At3g55890 (121 aa).

The Yippee domain maps to 12–109 (NIYICKLCKT…LELYKISGPH (98 aa)). Residues Cys-16, Cys-19, Cys-72, and Cys-75 each contribute to the Zn(2+) site.

Belongs to the yippee family.

The chain is Protein yippee-like At3g55890 from Arabidopsis thaliana (Mouse-ear cress).